A 116-amino-acid chain; its full sequence is Large ribosomal subunit protein uL18 (116 aa).

Belongs to the universal ribosomal protein uL18 family. Part of the 50S ribosomal subunit; part of the 5S rRNA/L5/L18/L25 subcomplex. Contacts the 5S and 23S rRNAs.

Functionally, this is one of the proteins that bind and probably mediate the attachment of the 5S RNA into the large ribosomal subunit, where it forms part of the central protuberance. The sequence is that of Large ribosomal subunit protein uL18 from Chromohalobacter salexigens (strain ATCC BAA-138 / DSM 3043 / CIP 106854 / NCIMB 13768 / 1H11).